The sequence spans 442 residues: MSKTYHFIGIKGSGMSALALMLHQMGHKVQGSDVEKYYFTQRGLEQAGITILPFSEDNITPDMELIVGNAFRENNKEVAYALRHQIPFKRYHDFLGDFMKSFISFAVAGAHGKTSTTGLLSHVLKNITDTSYLIGDGTGRGSANAQYFVFESDEYERHFMPYHPEYSIITNIDFDHPDYFTGIADVRNAFNDYAKQVKKALFVYGEDDELKKIEAPAPIYYYGFEEGNDFIAYDITRTTNGSDFKVKHQGEVIGQFHVPAYGKHNILNATAVIANLFVAGIDMALVADHLKTFSGVKRRFTEKIINDTIIIDDFAHHPTEIVATIDAARQKYPSKEIVAIFQPHTFTRTIALLEDFACALNEADSVYLAQIYGSAREVDKGEVRVEDLAAKIIKPSQVVTVENVSPLLDHDNAVYVFMGAGDIQLYEHSFEELLANLTKNNQ.

ATP is bound at residue 109–115; sequence GAHGKTS.

It belongs to the MurCDEF family.

The protein localises to the cytoplasm. It catalyses the reaction UDP-N-acetyl-alpha-D-muramate + L-alanine + ATP = UDP-N-acetyl-alpha-D-muramoyl-L-alanine + ADP + phosphate + H(+). It participates in cell wall biogenesis; peptidoglycan biosynthesis. In terms of biological role, cell wall formation. This Streptococcus pyogenes serotype M3 (strain SSI-1) protein is UDP-N-acetylmuramate--L-alanine ligase.